A 159-amino-acid polypeptide reads, in one-letter code: U1 small nuclear ribonucleoprotein C (159 aa).

The segment at 4-36 (FYCDYCDTYLTHDSPSVRKTHCSGRKHKENVKD) adopts a Matrin-type zinc-finger fold. At tyrosine 8 the chain carries Phosphotyrosine. Serine 17 carries the phosphoserine modification. Residue lysine 52 is modified to N6-acetyllysine. Positions 62 to 96 (IPPAPFSAPPPAGAMIPPPPSLPGPPRPGMMPAPH) are disordered. Positions 63 to 92 (PPAPFSAPPPAGAMIPPPPSLPGPPRPGMM) are enriched in pro residues.

This sequence belongs to the U1 small nuclear ribonucleoprotein C family. As to quaternary structure, component of the U1 snRNP. The U1 snRNP is composed of the U1 snRNA and the 7 core Sm proteins SNRPB, SNRPD1, SNRPD2, SNRPD3, SNRPE, SNRPF and SNRPG that assemble in a heptameric protein ring on the Sm site of the small nuclear RNA to form the core snRNP, and at least 3 U1 snRNP-specific proteins SNRNP70/U1-70K, SNRPA/U1-A and SNRPC/U1-C. SNRPC/U1-C interacts with U1 snRNA and the 5' splice-site region of the pre-mRNA. Interacts (via N-terminus) with TIA1 (via C-terminus); thereby promoting spliceosomal U1 snRNP recruitment to 5' splice sites.

Its subcellular location is the nucleus. In terms of biological role, component of the spliceosomal U1 snRNP, which is essential for recognition of the pre-mRNA 5' splice-site and the subsequent assembly of the spliceosome. SNRPC/U1-C is directly involved in initial 5' splice-site recognition for both constitutive and regulated alternative splicing. The interaction with the 5' splice-site seems to precede base-pairing between the pre-mRNA and the U1 snRNA. Stimulates commitment or early (E) complex formation by stabilizing the base pairing of the 5' end of the U1 snRNA and the 5' splice-site region. The sequence is that of U1 small nuclear ribonucleoprotein C from Rattus norvegicus (Rat).